The primary structure comprises 195 residues: MSEQEKVEQEEISAELETQNEQEKPMEETEIQDGDALENAIARVQELEEQLIQAVKKEQDILLRTRAEIDNIRRRAEQDVEKAHKFALEKFAKDLLETIDNLERALSTPANVENETIKSLVDGVELTLKGLLSTVARFGVEPVGVIGETFNPELHQAISMQPTEGFESNQITVVLQKGYLLNGRVIRPAMVMVAQ.

The interval methionine 1–glutamate 30 is disordered. A compositionally biased stretch (acidic residues) spans glutamate 10–asparagine 20.

It belongs to the GrpE family. Homodimer.

It localises to the cytoplasm. Its function is as follows. Participates actively in the response to hyperosmotic and heat shock by preventing the aggregation of stress-denatured proteins, in association with DnaK and GrpE. It is the nucleotide exchange factor for DnaK and may function as a thermosensor. Unfolded proteins bind initially to DnaJ; upon interaction with the DnaJ-bound protein, DnaK hydrolyzes its bound ATP, resulting in the formation of a stable complex. GrpE releases ADP from DnaK; ATP binding to DnaK triggers the release of the substrate protein, thus completing the reaction cycle. Several rounds of ATP-dependent interactions between DnaJ, DnaK and GrpE are required for fully efficient folding. This Histophilus somni (strain 2336) (Haemophilus somnus) protein is Protein GrpE.